The primary structure comprises 825 residues: Glycerol-3-phosphate acyltransferase 1, mitochondrial (825 aa).

The Cytoplasmic portion of the chain corresponds to 1–87 (MDESALTLGT…FFNPSIPSLG (87 aa)). Positions 80–120 (NPSIPSLGLRNVIYINETHTRHRGWLARRLSYVLFIQERDV) are important for mitochondrial localization. An intramembrane segment occupies 88–118 (LRNVIYINETHTRHRGWLARRLSYVLFIQER). Residues 119–825 (DVHKGMFATN…LEYILSLVVL (707 aa)) lie on the Cytoplasmic side of the membrane. Residues 230 to 235 (HRSHID) carry the HXXXXD motif motif. Residues R278, R279, K288, R293, and R328 each contribute to the CoA site. S380 carries the phosphoserine modification. Positions 435–455 (SRPSGAADEGTDMSINESRNA) are disordered. R461 is a binding site for CoA. Phosphoserine is present on residues S685 and S692. Residues K777 and K781 each carry the N6-acetyllysine modification.

It belongs to the GPAT/DAPAT family. Highly expressed in adipose tissues and lung. Low expression in liver.

The protein localises to the mitochondrion outer membrane. The enzyme catalyses sn-glycerol 3-phosphate + an acyl-CoA = a 1-acyl-sn-glycero-3-phosphate + CoA. It catalyses the reaction (9Z,12Z)-octadecadienoyl-CoA + sn-glycerol 3-phosphate = 1-(9Z,12Z)-octadecadienoyl-sn-glycero-3-phosphate + CoA. The catalysed reaction is sn-glycerol 3-phosphate + (9Z)-octadecenoyl-CoA = 1-(9Z-octadecenoyl)-sn-glycero-3-phosphate + CoA. It carries out the reaction sn-glycerol 3-phosphate + octadecanoyl-CoA = 1-octadecanoyl-sn-glycero-3-phosphate + CoA. The enzyme catalyses sn-glycerol 3-phosphate + hexadecanoyl-CoA = 1-hexadecanoyl-sn-glycero-3-phosphate + CoA. It catalyses the reaction dodecanoyl-CoA + sn-glycerol 3-phosphate = 1-dodecanoyl-sn-glycerol 3-phosphate + CoA. The catalysed reaction is 1-acyl-sn-glycero-3-phospho-(1'-sn-glycerol) + an acyl-CoA = a 1,2-diacyl-sn-glycero-3-phospho-(1'-sn-glycerol) + CoA. Its pathway is phospholipid metabolism; CDP-diacylglycerol biosynthesis; CDP-diacylglycerol from sn-glycerol 3-phosphate: step 1/3. Its function is as follows. Mitochondrial membrane protein that catalyzes the essential first step of biosynthesis of glycerolipids such as triglycerides, phosphatidic acids and lysophosphatidic acids. Esterifies acyl-group from acyl-coenzyme A (acyl-CoA) to the sn-1 position of glycerol-3-phosphate, to produce lysophosphatidic acid. Has a narrow hydrophobic binding cleft that selects for a linear acyl chain. Catalytic activity is higher for substrates with a 16-carbon acyl chain. This Bos taurus (Bovine) protein is Glycerol-3-phosphate acyltransferase 1, mitochondrial.